The primary structure comprises 183 residues: TATA-box-binding protein (183 aa).

2 repeat units span residues 7-83 and 99-177.

The protein belongs to the TBP family.

Its function is as follows. General factor that plays a role in the activation of archaeal genes transcribed by RNA polymerase. Binds specifically to the TATA box promoter element which lies close to the position of transcription initiation. The polypeptide is TATA-box-binding protein (Methanothrix thermoacetophila (strain DSM 6194 / JCM 14653 / NBRC 101360 / PT) (Methanosaeta thermophila)).